Consider the following 195-residue polypeptide: MQSIKLVVVGDGAVGKTCLLISYTSNSFPTEYVPTVFDNYSANVMVDNKTVSLGLWDTAGQEDYDRLRPLSYPQTDVFLICFAIISQTSYTNVKSKWWPEVTHHCPNCTIILVGTKCDLREDKESLEKLREKHQQPLTFQQGEQMAKEIKAFCYMECSALTQKGLKQVFDEAIKAVIFPDRDKATNKKNSKCSIL.

10–17 (GDGAVGKT) is a binding site for GTP. An Effector region motif is present at residues 32 to 40 (YVPTVFDNY). Residues 57-61 (DTAGQ) and 115-118 (TKCD) each bind GTP. At C192 the chain carries Cysteine methyl ester. Residue C192 is the site of S-geranylgeranyl cysteine attachment. Residues 193–195 (SIL) constitute a propeptide, removed in mature form.

The protein belongs to the small GTPase superfamily. Rho family. Interacts with pakB.

It localises to the cell membrane. In Dictyostelium discoideum (Social amoeba), this protein is Rho-related protein racB (racB).